An 838-amino-acid polypeptide reads, in one-letter code: MSDSPGTPNGKDTIRNYEFTPIGYVKERETSVPAVANSDSRKRSSPYRSPAADDDGPPQKAFRADDTLNSTRIFNDSSFDDTLPSQSVMNSVRINGVSDLHDNGIEEENGGASNPLKEQQETLYKLNVENYNLRVKCNSLLKFLNNVTDEGELRKNLAVIDELQEWKGKYQELKKAYRSLQLKFDQSEHKDQADLEQDARSNEKEMRSLQKKLQEYQEQVTQSKKLVESLENKLGNSASGSKEIKEQFEHKSSLLQERIDKLESELAAKDKELEINRNEIKNLQNDLQKANHDSSSLADQKLQTRSKEIENLNNRLKSAVREREAAEHLLKESQNALRSLRAELSTLRQESDRKLDDLSVAKEKSERVLKERLEERTSQSERLQQRANSLEQNAAELSSRLQLRDQRIKALEDEARELQKMNQRIQDLNDGKDSEKLQAQNQKLDGLRSEIERIKNEKEELERDNDKLKKRIVAQATKSPALKANSRKSLEKDAEAEKLRSRVRELEQELRVSKDALNKLRHNYRRDTDELKLQLEGAETDQVSAKRSLEKEIDRLKFEIDSLRESRKDEIAIMENRFNLLRRENEQLSGQGGSQLASLQKSLTEKQKEINELVQRCSDNTMDRLKLNRELAKAQEAESEGKREASKLSARLEFITKEFVKYKEAKTQGGEAGADRLNEKWSEKYQHMKQRLLNELKVLQEENLELERATLERKGSAGSGTYNVGMSSLQDQLDYYRLKYHREVAHTNDLNVMNDYLNRVLRASAQHVRLDILKLENEAPPDAFPEFTYRGRLRFKTVALFVLAAVRVQRVSLKLRWDSQRLNYLQKKIALEQDKITW.

Disordered stretches follow at residues 1–67, 187–209, and 287–310; these read MSDS…ADDT, SEHK…MRSL, and LQKA…KEIE. 2 coiled-coil regions span residues 163 to 644 and 682 to 709; these read LQEW…GKRE and SEKY…LERA. Polar residues predominate over residues 287-303; the sequence is LQKANHDSSSLADQKLQ.

This sequence belongs to the SPC110 family. As to quaternary structure, homodimer.

The protein resides in the nucleus. Its subcellular location is the cytoplasm. The protein localises to the cytoskeleton. It is found in the microtubule organizing center. It localises to the spindle pole body. In terms of biological role, component of the spindle pole body (SPB) required for the proper execution of spindle pole body (SPB) duplication. Potential role in cross-linking filaments or anchoring other molecules. It is essential for growth. In Lachancea thermotolerans (strain ATCC 56472 / CBS 6340 / NRRL Y-8284) (Yeast), this protein is Spindle pole body component 110 (SPC110).